A 213-amino-acid polypeptide reads, in one-letter code: Large ribosomal subunit protein uL1 (213 aa).

It belongs to the universal ribosomal protein uL1 family. In terms of assembly, part of the 50S ribosomal subunit.

In terms of biological role, binds directly to 23S rRNA. Probably involved in E site tRNA release. Its function is as follows. Protein L1 is also a translational repressor protein, it controls the translation of its operon by binding to its mRNA. The polypeptide is Large ribosomal subunit protein uL1 (Methanocella arvoryzae (strain DSM 22066 / NBRC 105507 / MRE50)).